The sequence spans 66 residues: Photosystem II reaction center protein H (66 aa).

Residues 27–47 (GAVPVMTVIGLLLLVFLVILL) form a helical membrane-spanning segment.

The protein belongs to the PsbH family. PSII is composed of 1 copy each of membrane proteins PsbA, PsbB, PsbC, PsbD, PsbE, PsbF, PsbH, PsbI, PsbJ, PsbK, PsbL, PsbM, PsbT, PsbX, PsbY, Psb30/Ycf12, peripheral proteins PsbO, CyanoQ (PsbQ), PsbU, PsbV and a large number of cofactors. It forms dimeric complexes.

It is found in the cellular thylakoid membrane. Functionally, one of the components of the core complex of photosystem II (PSII), required for its stability and/or assembly. PSII is a light-driven water:plastoquinone oxidoreductase that uses light energy to abstract electrons from H(2)O, generating O(2) and a proton gradient subsequently used for ATP formation. It consists of a core antenna complex that captures photons, and an electron transfer chain that converts photonic excitation into a charge separation. This chain is Photosystem II reaction center protein H, found in Prochlorococcus marinus (strain MIT 9215).